A 119-amino-acid polypeptide reads, in one-letter code: Small ribosomal subunit protein uS10 (119 aa).

Belongs to the universal ribosomal protein uS10 family. As to quaternary structure, component of the small ribosomal subunit. Mature ribosomes consist of a small (40S) and a large (60S) subunit. The 40S subunit contains about 32 different proteins and 1 molecule of RNA (18S). The 60S subunit contains 45 different proteins and 3 molecules of RNA (25S, 5.8S and 5S).

The protein resides in the cytoplasm. Its function is as follows. Component of the ribosome, a large ribonucleoprotein complex responsible for the synthesis of proteins in the cell. The small ribosomal subunit (SSU) binds messenger RNAs (mRNAs) and translates the encoded message by selecting cognate aminoacyl-transfer RNA (tRNA) molecules. The large subunit (LSU) contains the ribosomal catalytic site termed the peptidyl transferase center (PTC), which catalyzes the formation of peptide bonds, thereby polymerizing the amino acids delivered by tRNAs into a polypeptide chain. The nascent polypeptides leave the ribosome through a tunnel in the LSU and interact with protein factors that function in enzymatic processing, targeting, and the membrane insertion of nascent chains at the exit of the ribosomal tunnel. The chain is Small ribosomal subunit protein uS10 (RPS20) from Candida albicans (strain SC5314 / ATCC MYA-2876) (Yeast).